Here is a 263-residue protein sequence, read N- to C-terminus: Tryptophan synthase alpha chain (263 aa).

Active-site proton acceptor residues include glutamate 50 and aspartate 61.

This sequence belongs to the TrpA family. As to quaternary structure, tetramer of two alpha and two beta chains.

It catalyses the reaction (1S,2R)-1-C-(indol-3-yl)glycerol 3-phosphate + L-serine = D-glyceraldehyde 3-phosphate + L-tryptophan + H2O. It functions in the pathway amino-acid biosynthesis; L-tryptophan biosynthesis; L-tryptophan from chorismate: step 5/5. The alpha subunit is responsible for the aldol cleavage of indoleglycerol phosphate to indole and glyceraldehyde 3-phosphate. The chain is Tryptophan synthase alpha chain from Clostridium acetobutylicum (strain ATCC 824 / DSM 792 / JCM 1419 / IAM 19013 / LMG 5710 / NBRC 13948 / NRRL B-527 / VKM B-1787 / 2291 / W).